Here is an 87-residue protein sequence, read N- to C-terminus: UPF0248 protein TON_0940 (87 aa).

Belongs to the UPF0248 family.

This Thermococcus onnurineus (strain NA1) protein is UPF0248 protein TON_0940.